A 523-amino-acid polypeptide reads, in one-letter code: Nuclear receptor ROR-alpha (523 aa).

Over residues 1-26 the composition is skewed to low complexity; that stretch reads MESAPAAPDPAASEPGSSGSEAAAGS. Positions 1–63 are disordered; that stretch reads MESAPAAPDP…SRGISVTKKT (63 aa). Lys38 is subject to N6-methyllysine. 2 NR C4-type zinc fingers span residues 73–93 and 109–133; these read CKIC…CEGC and CPRQ…LQKC. The segment at residues 73–138 is a DNA-binding region (nuclear receptor); sequence CKICGDKSSG…RLQKCLAVGM (66 aa). Residues 154 to 183 form a disordered region; it reads DSLYAEVQKHRMQQQQRDHQQQPGEAEPLT. Thr183 is subject to Phosphothreonine; by MAPK1. Lys240 is covalently cross-linked (Glycyl lysine isopeptide (Lys-Gly) (interchain with G-Cter in SUMO)). Positions 272–510 constitute an NR LBD domain; the sequence is ELEHLAQNIS…LHFPPLYKEL (239 aa). The short motif at 506–511 is the AF-2 element; that stretch reads LYKELF.

This sequence belongs to the nuclear hormone receptor family. NR1 subfamily. Monomer. Interacts (via the DNA-binding domain) with HIF1A; the interaction enhances HIF1A transcription under hypoxia through increasing protein stability. Interacts with CEBPB; the interaction disrupts the interaction CEBPB:EP300. Interacts with the coactivators NCOA2, PPARGC1A (via LXXLL motif), EP300 and MED1. Interacts with the corepressor NCOR1. Interacts with MAGED1 and CTNNB1. Interacts with CRY1 and PER2. Interacts (via AF-2 motif) with PROX1. Interacts with NRIP1. Isoform 4 interacts (via AF-2 motif) with isoform 1 of FOXP3 (via LXXLL motif). In terms of processing, phosphorylation by conventional PKCs in neurons inhibits transcriptional activity. Phosphorylated on Thr-183 by MAPK1/ERK1 in vitro. Post-translationally, sumoylated by SENP1 and SENP2. Sumoylation, promoted by PIAS2, PIAS3, PIAS4 but not PIAS1, enhances the transcriptional activity. Desumoylated by SENP1. Ubiquitinated, leading to its degradation by the proteasome. Proteasomal degradation is required for efficient transcriptional activity and is prevented by HR. In terms of processing, monomethylated at Lys-38 by EZH2, this creates a degron recognized by a DCX (DDB1-DCAF1/VPRBP-CUL4A-RBX1) E3 ubiquitin ligase complex. As to expression, expressed in cerebellum, heart, liver, lung, kidney, retina and brown and white adipose tissues. Expressed in the subset of mature Th17 cells.

It localises to the nucleus. In terms of biological role, nuclear receptor that binds DNA as a monomer to ROR response elements (RORE) containing a single core motif half-site 5'-AGGTCA-3' preceded by a short A-T-rich sequence. Key regulator of embryonic development, cellular differentiation, immunity, circadian rhythm as well as lipid, steroid, xenobiotics and glucose metabolism. Considered to have intrinsic transcriptional activity, have some natural ligands like oxysterols that act as agonists (25-hydroxycholesterol) or inverse agonists (7-oxygenated sterols), enhancing or repressing the transcriptional activity, respectively. Recruits distinct combinations of cofactors to target genes regulatory regions to modulate their transcriptional expression, depending on the tissue, time and promoter contexts. Regulates genes involved in photoreceptor development including OPN1SW, OPN1SM and ARR3 and skeletal muscle development with MYOD1. Required for proper cerebellum development, regulates SHH gene expression, among others, to induce granule cells proliferation as well as expression of genes involved in calcium-mediated signal transduction. Regulates the circadian expression of several clock genes, including CLOCK, BMAL1, NPAS2 and CRY1. Competes with NR1D1 for binding to their shared DNA response element on some clock genes such as BMAL1, CRY1 and NR1D1 itself, resulting in NR1D1-mediated repression or RORA-mediated activation of clock genes expression, leading to the circadian pattern of clock genes expression. Therefore influences the period length and stability of the clock. Regulates genes involved in lipid metabolism such as apolipoproteins APOA1, APOA5, APOC3 and PPARG. In liver, has specific and redundant functions with RORC as positive or negative modulator of expression of genes encoding phase I and phase II proteins involved in the metabolism of lipids, steroids and xenobiotics, such as CYP7B1 and SULT2A1. Induces a rhythmic expression of some of these genes. In addition, interplays functionally with NR1H2 and NR1H3 for the regulation of genes involved in cholesterol metabolism. Also involved in the regulation of hepatic glucose metabolism through the modulation of G6PC1 and PCK1. In adipose tissue, plays a role as negative regulator of adipocyte differentiation, probably acting through dual mechanisms. May suppress CEBPB-dependent adipogenesis through direct interaction and PPARG-dependent adipogenesis through competition for DNA-binding. Downstream of IL6 and TGFB and synergistically with RORC isoform 2, is implicated in the lineage specification of uncommitted CD4(+) T-helper (T(H)) cells into T(H)17 cells, antagonizing the T(H)1 program. Probably regulates IL17 and IL17F expression on T(H) by binding to the essential enhancer conserved non-coding sequence 2 (CNS2) in the IL17-IL17F locus. Involved in hypoxia signaling by interacting with and activating the transcriptional activity of HIF1A. May inhibit cell growth in response to cellular stress. May exert an anti-inflammatory role by inducing CHUK expression and inhibiting NF-kappa-B signaling. This chain is Nuclear receptor ROR-alpha (Rora), found in Mus musculus (Mouse).